Consider the following 99-residue polypeptide: Integration host factor subunit alpha (99 aa).

Residues 51–71 form a disordered region; the sequence is NFDLRDKNQRPGRNPKTGEDI.

The protein belongs to the bacterial histone-like protein family. Heterodimer of an alpha and a beta chain.

Functionally, this protein is one of the two subunits of integration host factor, a specific DNA-binding protein that functions in genetic recombination as well as in transcriptional and translational control. This chain is Integration host factor subunit alpha (ihfA), found in Dickeya dadantii (strain 3937) (Erwinia chrysanthemi (strain 3937)).